The following is a 414-amino-acid chain: Gamma-glutamyl phosphate reductase (414 aa).

This sequence belongs to the gamma-glutamyl phosphate reductase family.

It localises to the cytoplasm. It carries out the reaction L-glutamate 5-semialdehyde + phosphate + NADP(+) = L-glutamyl 5-phosphate + NADPH + H(+). The protein operates within amino-acid biosynthesis; L-proline biosynthesis; L-glutamate 5-semialdehyde from L-glutamate: step 2/2. Its function is as follows. Catalyzes the NADPH-dependent reduction of L-glutamate 5-phosphate into L-glutamate 5-semialdehyde and phosphate. The product spontaneously undergoes cyclization to form 1-pyrroline-5-carboxylate. This is Gamma-glutamyl phosphate reductase from Xanthomonas campestris pv. campestris (strain ATCC 33913 / DSM 3586 / NCPPB 528 / LMG 568 / P 25).